Reading from the N-terminus, the 292-residue chain is Ribosomal protein L11 methyltransferase (292 aa).

The S-adenosyl-L-methionine site is built by Thr136, Gly159, Asp181, and Asn228.

Belongs to the methyltransferase superfamily. PrmA family.

The protein resides in the cytoplasm. It catalyses the reaction L-lysyl-[protein] + 3 S-adenosyl-L-methionine = N(6),N(6),N(6)-trimethyl-L-lysyl-[protein] + 3 S-adenosyl-L-homocysteine + 3 H(+). Functionally, methylates ribosomal protein L11. The polypeptide is Ribosomal protein L11 methyltransferase (Agrobacterium fabrum (strain C58 / ATCC 33970) (Agrobacterium tumefaciens (strain C58))).